The sequence spans 251 residues: Probable transcriptional regulatory protein PMI1113 (251 aa).

Belongs to the TACO1 family.

It localises to the cytoplasm. This is Probable transcriptional regulatory protein PMI1113 from Proteus mirabilis (strain HI4320).